The primary structure comprises 932 residues: RNA-binding protein 12 (932 aa).

The tract at residues 97-116 (IPPANASRSGPPPSSGMSGR) is disordered. Residues 98–116 (PPANASRSGPPPSSGMSGR) are compositionally biased toward low complexity. In terms of domain architecture, RRM 1 spans 304–379 (LYVSVHGMPF…RYVEVSPATE (76 aa)). A phosphoserine mark is found at S352 and S375. Polar residues-rich tracts occupy residues 392-401 (KQNMGPSGQT) and 408-417 (LPRSKSPSGQ). Positions 392–424 (KQNMGPSGQTHPPPQTLPRSKSPSGQKRSRSRS) are disordered. 3 positions are modified to phosphoserine: S420, S422, and S424. One can recognise an RRM 2 domain in the interval 430-507 (FCVYLKGLPF…RFIQVHPITK (78 aa)). S525 carries the phosphoserine modification. A compositionally biased stretch (low complexity) spans 717-734 (NGPPFNFPGNFGGSNAFG). The interval 717–855 (NGPPFNFPGN…PGFASSSGKP (139 aa)) is disordered. Over residues 783–811 (SGFGGGPQNFGNGPGSLGGPPGFGSGPPG) the composition is skewed to gly residues. Residues 824-838 (AFGPGPGPGPGPGPG) are compositionally biased toward pro residues. An RRM 3 domain is found at 856–932 (GPTVIKVQNM…PIGSRKVNLY (77 aa)).

Its subcellular location is the nucleus. The protein is RNA-binding protein 12 (RBM12) of Pongo abelii (Sumatran orangutan).